A 259-amino-acid polypeptide reads, in one-letter code: 5'-nucleotidase SurE (259 aa).

A divalent metal cation is bound by residues Asp10, Asp11, Ser41, and Asn96.

It belongs to the SurE nucleotidase family. It depends on a divalent metal cation as a cofactor.

The protein localises to the cytoplasm. The enzyme catalyses a ribonucleoside 5'-phosphate + H2O = a ribonucleoside + phosphate. Nucleotidase that shows phosphatase activity on nucleoside 5'-monophosphates. The chain is 5'-nucleotidase SurE from Wolinella succinogenes (strain ATCC 29543 / DSM 1740 / CCUG 13145 / JCM 31913 / LMG 7466 / NCTC 11488 / FDC 602W) (Vibrio succinogenes).